Consider the following 431-residue polypeptide: Argininosuccinate lyase (431 aa).

Belongs to the lyase 1 family. Argininosuccinate lyase subfamily.

The protein localises to the cytoplasm. The catalysed reaction is 2-(N(omega)-L-arginino)succinate = fumarate + L-arginine. The protein operates within amino-acid biosynthesis; L-arginine biosynthesis; L-arginine from L-ornithine and carbamoyl phosphate: step 3/3. The chain is Argininosuccinate lyase from Stenotrophomonas maltophilia (strain R551-3).